A 900-amino-acid polypeptide reads, in one-letter code: Nonribosomal peptide synthetase AMT10 (900 aa).

Residues 284-686 (KQAQQNPAAM…ARRNGYIKLR (403 aa)) are adenylation. The 77-residue stretch at 824-900 (ELQSDMERYL…QMARNCSLLD (77 aa)) folds into the Carrier domain. Residue S861 is modified to O-(pantetheine 4'-phosphoryl)serine.

Belongs to the NRP synthetase family.

The protein operates within mycotoxin biosynthesis. In terms of biological role, nonribosomal peptide synthetase; part of the gene clusters that mediate the biosynthesis of AM-toxins, host-selective toxins (HSTs) causing Alternaria blotch on apple, a worldwide distributed disease. AM-toxins are cyclic depsipeptides containing the 3 residues 2-hydroxy-isovaleric acid (2-HIV), dehydroalanine, L-alanine which are common for all 3 AM-toxins I to III. The fourth precursor is L-alpha-amino-methoxyphenyl-valeric acid (L-Amv) for AM-toxin I, L-alpha-amino-phenyl-valeric acid (L-Apv) for AM-toxin II, and L-alpha-amino-hydroxyphenyl-valeric acid (L-Ahv) for AM-toxin III. AM-toxins have two target sites for affecting susceptible apple cells; they cause invagination of the plasma membrane and electrolyte loss and chloroplast disorganization. The non-ribosomal peptide synthetase AMT1 contains 4 catalytic modules and is responsible for activation of each residue in AM-toxin. The aldo-keto reductase AMT2 catalyzes the conversion of 2-keto-isovaleric acid (2-KIV) to 2-hydroxy-isovaleric acid (2-HIV), one of the precursor residues incorporated by AMT1 during AM-toxin biosynthesis, by reduction of its ketone to an alcohol. The cytochrome P450 monooxygenase AMT3 and the thioesterase AMT4 are also important for AM-toxin production, but their exact function within the AM-toxin biosynthesis are not known yet. Up to 21 proteins (including AMT1 to AMT4) are predicted to be involved in AM-toxin biosynthesis since their expression ishighly up-regulated in AM-toxin-producing cultures. In Alternaria alternata (Alternaria rot fungus), this protein is Nonribosomal peptide synthetase AMT10.